A 115-amino-acid chain; its full sequence is Large ribosomal subunit protein bL20 (115 aa).

This sequence belongs to the bacterial ribosomal protein bL20 family.

In terms of biological role, binds directly to 23S ribosomal RNA and is necessary for the in vitro assembly process of the 50S ribosomal subunit. It is not involved in the protein synthesizing functions of that subunit. The sequence is that of Large ribosomal subunit protein bL20 from Pelodictyon phaeoclathratiforme (strain DSM 5477 / BU-1).